We begin with the raw amino-acid sequence, 185 residues long: Ubiquitin-conjugating enzyme E2 5 (185 aa).

Residues 1 to 148 form the UBC core domain; the sequence is MSSPSKRREM…VKEYCEKYAK (148 aa). The Glycyl thioester intermediate role is filled by Cys85. Residues 146–185 form a disordered region; sequence YAKPRADTEEMSSDDEMSEDEYASDGDDEDDVAIAGKLDP. The segment covering 154–177 has biased composition (acidic residues); it reads EEMSSDDEMSEDEYASDGDDEDDV.

This sequence belongs to the ubiquitin-conjugating enzyme family. Expressed in developing ovules, but not in vascular tissues.

The catalysed reaction is S-ubiquitinyl-[E1 ubiquitin-activating enzyme]-L-cysteine + [E2 ubiquitin-conjugating enzyme]-L-cysteine = [E1 ubiquitin-activating enzyme]-L-cysteine + S-ubiquitinyl-[E2 ubiquitin-conjugating enzyme]-L-cysteine.. Its pathway is protein modification; protein ubiquitination. In terms of biological role, accepts the ubiquitin from the E1 complex and catalyzes its covalent attachment to other proteins. The chain is Ubiquitin-conjugating enzyme E2 5 (UBC5) from Arabidopsis thaliana (Mouse-ear cress).